The chain runs to 328 residues: Malate dehydrogenase 1 (328 aa).

12-18 (GAAGQIG) contributes to the NAD(+) binding site. Substrate is bound by residues arginine 95 and arginine 101. Residues asparagine 108, glutamine 115, and 132–134 (VGN) contribute to the NAD(+) site. Asparagine 134 and arginine 165 together coordinate substrate. The Proton acceptor role is filled by histidine 190.

This sequence belongs to the LDH/MDH superfamily. MDH type 2 family.

The enzyme catalyses (S)-malate + NAD(+) = oxaloacetate + NADH + H(+). In terms of biological role, catalyzes the reversible oxidation of malate to oxaloacetate. The protein is Malate dehydrogenase 1 of Albidiferax ferrireducens (strain ATCC BAA-621 / DSM 15236 / T118) (Rhodoferax ferrireducens).